Here is a 78-residue protein sequence, read N- to C-terminus: Small ribosomal subunit protein bS16 (78 aa).

It belongs to the bacterial ribosomal protein bS16 family.

The protein is Small ribosomal subunit protein bS16 of Maridesulfovibrio salexigens (strain ATCC 14822 / DSM 2638 / NCIMB 8403 / VKM B-1763) (Desulfovibrio salexigens).